The chain runs to 295 residues: Protoheme IX farnesyltransferase (295 aa).

9 consecutive transmembrane segments (helical) span residues 30-50, 51-71, 93-115, 119-136, 148-168, 175-195, 219-239, 244-264, and 275-295; these read LVVL…HPLI, AVIS…INMW, ISRS…IMMI, YISG…IYVY, IVIG…SVTG, LVLF…LSLL, IHIL…GLFL, LYEI…FQVF, and MFTY…LSSF.

The protein belongs to the UbiA prenyltransferase family. Protoheme IX farnesyltransferase subfamily.

Its subcellular location is the cell inner membrane. It catalyses the reaction heme b + (2E,6E)-farnesyl diphosphate + H2O = Fe(II)-heme o + diphosphate. It functions in the pathway porphyrin-containing compound metabolism; heme O biosynthesis; heme O from protoheme: step 1/1. In terms of biological role, converts heme B (protoheme IX) to heme O by substitution of the vinyl group on carbon 2 of heme B porphyrin ring with a hydroxyethyl farnesyl side group. The polypeptide is Protoheme IX farnesyltransferase (Ehrlichia ruminantium (strain Welgevonden)).